Here is a 365-residue protein sequence, read N- to C-terminus: D-alanine--D-alanine ligase (365 aa).

The ATP-grasp domain occupies 135–345 (KLLLKSFNIP…YGSLVDKLIA (211 aa)). 168–223 (KQSLDYPVIVKPAMLGSSIGISIAYNETQIEKCIEEAFAYDLTVVIEKFMRAREIE) lines the ATP pocket. The Mg(2+) site is built by D298, E312, and N314.

The protein belongs to the D-alanine--D-alanine ligase family. It depends on Mg(2+) as a cofactor. Requires Mn(2+) as cofactor.

The protein resides in the cytoplasm. The catalysed reaction is 2 D-alanine + ATP = D-alanyl-D-alanine + ADP + phosphate + H(+). It participates in cell wall biogenesis; peptidoglycan biosynthesis. In terms of biological role, cell wall formation. The chain is D-alanine--D-alanine ligase from Borrelia turicatae (strain 91E135).